The sequence spans 164 residues: MRILVLGVGNILLTDEAIGVRIVEALEQRYILPDYVEILDGGTAGMELLGDMANRDHLIIADAIVSKKNAPGTMMILRDEEVPALFTNKISPHQLGLADVLSALRFTGEFPKKLTLVGVIPESLEPHIGLTPTVEAMIEPALEQVLAALRESGVEAIPREAIHD.

Positions 16, 62, and 93 each coordinate Ni(2+).

It belongs to the peptidase A31 family. Requires Ni(2+) as cofactor.

Its function is as follows. Protease involved in the C-terminal processing of HybC, the large subunit of hydrogenase 2. Specifically cleaves off a 15 amino acid peptide from the C-terminus of the precursor of HybC. This is Hydrogenase 2 maturation protease (hybD) from Escherichia coli (strain K12).